The chain runs to 333 residues: DNA-directed RNA polymerase subunit alpha (333 aa).

Residues 1 to 234 (MQISVNEFLT…QQLAAFVDLK (234 aa)) form an alpha N-terminal domain (alpha-NTD) region. Residues 248-333 (IDPILLRPVD…SLKKDDKATA (86 aa)) form an alpha C-terminal domain (alpha-CTD) region.

It belongs to the RNA polymerase alpha chain family. Homodimer. The RNAP catalytic core consists of 2 alpha, 1 beta, 1 beta' and 1 omega subunit. When a sigma factor is associated with the core the holoenzyme is formed, which can initiate transcription.

The enzyme catalyses RNA(n) + a ribonucleoside 5'-triphosphate = RNA(n+1) + diphosphate. In terms of biological role, DNA-dependent RNA polymerase catalyzes the transcription of DNA into RNA using the four ribonucleoside triphosphates as substrates. The sequence is that of DNA-directed RNA polymerase subunit alpha from Pseudomonas fluorescens (strain ATCC BAA-477 / NRRL B-23932 / Pf-5).